Here is a 477-residue protein sequence, read N- to C-terminus: UDP-N-acetylmuramate--L-alanine ligase (477 aa).

112–118 (GAHGKTT) provides a ligand contact to ATP.

Belongs to the MurCDEF family.

It localises to the cytoplasm. It carries out the reaction UDP-N-acetyl-alpha-D-muramate + L-alanine + ATP = UDP-N-acetyl-alpha-D-muramoyl-L-alanine + ADP + phosphate + H(+). It participates in cell wall biogenesis; peptidoglycan biosynthesis. Cell wall formation. The chain is UDP-N-acetylmuramate--L-alanine ligase from Delftia acidovorans (strain DSM 14801 / SPH-1).